We begin with the raw amino-acid sequence, 247 residues long: 3-oxoacyl-[acyl-carrier-protein] reductase FabG (247 aa).

NADP(+) is bound by residues 12 to 15 (GASR), Thr37, 62 to 63 (DV), and Asn89. Residue Ser141 participates in substrate binding. The Proton acceptor role is filled by Tyr154. Residues 154–158 (YAAAK) and Ile187 contribute to the NADP(+) site.

The protein belongs to the short-chain dehydrogenases/reductases (SDR) family. As to quaternary structure, homotetramer.

It catalyses the reaction a (3R)-hydroxyacyl-[ACP] + NADP(+) = a 3-oxoacyl-[ACP] + NADPH + H(+). It participates in lipid metabolism; fatty acid biosynthesis. Its function is as follows. Catalyzes the NADPH-dependent reduction of beta-ketoacyl-ACP substrates to beta-hydroxyacyl-ACP products, the first reductive step in the elongation cycle of fatty acid biosynthesis. This chain is 3-oxoacyl-[acyl-carrier-protein] reductase FabG (fabG), found in Pseudomonas aeruginosa (strain ATCC 15692 / DSM 22644 / CIP 104116 / JCM 14847 / LMG 12228 / 1C / PRS 101 / PAO1).